The sequence spans 367 residues: Probable outer membrane usher protein LpfC (367 aa).

The first 30 residues, 1-30, serve as a signal peptide directing secretion; it reads MSRKTVSRTFSSFSISVVAVAVASTFSAHA.

This sequence belongs to the fimbrial export usher family.

The protein resides in the cell outer membrane. Functionally, part of the lpfABCC'DE fimbrial operon. LP fimbriae may participate in the interaction with eukaryotic cells by assisting in microcolony formation. Could be involved in the export and assembly of the fimbrial subunits across the outer membrane. The chain is Probable outer membrane usher protein LpfC (lpfC) from Escherichia coli O157:H7.